The chain runs to 223 residues: Spore wall protein 26 (223 aa).

The N-terminal stretch at 1 to 16 (MNIIIFSLMTISFLRA) is a signal peptide. An HBM motif is present at residues 207–214 (SKKKLDKS).

The protein localises to the spore core. The protein resides in the spore wall. Its subcellular location is the spore. It is found in the perispore. In terms of biological role, spore wall protein involved in the adhesion to host cells surface. Microsporidian spore adherence is an integral part of activation and host cell invasion which requires the extrusion at the spore apex of a very long and coiled structure, the polar tube, through which the sporoplasm is pushed to enter into the potential host cell. The chain is Spore wall protein 26 (SWP26) from Nosema bombycis (strain CQ1 / CVCC 102059) (Microsporidian parasite).